Here is a 145-residue protein sequence, read N- to C-terminus: D-aminoacyl-tRNA deacylase (145 aa).

Residues 137–138 (GP) carry the Gly-cisPro motif, important for rejection of L-amino acids motif.

Belongs to the DTD family. As to quaternary structure, homodimer.

It is found in the cytoplasm. The catalysed reaction is glycyl-tRNA(Ala) + H2O = tRNA(Ala) + glycine + H(+). It catalyses the reaction a D-aminoacyl-tRNA + H2O = a tRNA + a D-alpha-amino acid + H(+). In terms of biological role, an aminoacyl-tRNA editing enzyme that deacylates mischarged D-aminoacyl-tRNAs. Also deacylates mischarged glycyl-tRNA(Ala), protecting cells against glycine mischarging by AlaRS. Acts via tRNA-based rather than protein-based catalysis; rejects L-amino acids rather than detecting D-amino acids in the active site. By recycling D-aminoacyl-tRNA to D-amino acids and free tRNA molecules, this enzyme counteracts the toxicity associated with the formation of D-aminoacyl-tRNA entities in vivo and helps enforce protein L-homochirality. This Shewanella baltica (strain OS195) protein is D-aminoacyl-tRNA deacylase.